The following is a 479-amino-acid chain: Anaerobic nitric oxide reductase flavorubredoxin (479 aa).

The segment at 30–210 is zinc metallo-hydrolase; it reads LRGSSYNSYL…PFSRLVTPKI (181 aa). Residues H79, E81, D83, H147, D166, and H227 each contribute to the Fe cation site. Residues 254-393 form the Flavodoxin-like domain; that stretch reads ITIFYDTMSN…LCREHGREIA (140 aa). FMN is bound by residues 260–264 and 342–369; these read TMSNN and AFGS…EMSL. The region spanning 423 to 474 is the Rubredoxin-like domain; the sequence is GPRMQCSVCQWIYDPAKGEPMQDVAPGTPWSEVPDNFLCPECSLGKDVFEEL. Residues C428, C431, C461, and C464 each coordinate Fe cation.

In the N-terminal section; belongs to the zinc metallo-hydrolase group 3 family. Homotetramer. The cofactor is Fe cation. It depends on FMN as a cofactor.

Its subcellular location is the cytoplasm. The protein operates within nitrogen metabolism; nitric oxide reduction. Its function is as follows. Anaerobic nitric oxide reductase; uses NADH to detoxify nitric oxide (NO), protecting several 4Fe-4S NO-sensitive enzymes. Has at least 2 reductase partners, only one of which (NorW, flavorubredoxin reductase) has been identified. NO probably binds to the di-iron center; electrons enter from the NorW at rubredoxin and are transferred sequentially to the FMN center and the di-iron center. Also able to function as an aerobic oxygen reductase. This is Anaerobic nitric oxide reductase flavorubredoxin from Escherichia coli O139:H28 (strain E24377A / ETEC).